Reading from the N-terminus, the 473-residue chain is MATVAEQWVLVEMVQALYEAPAYHLILEGILILWIIRLLFSKTYKLQERSDLTLKEKEELIEEWQPEPLVPPVSKDHPALNYNIVSGPPSHNIVVNGKECINFASFNFLGLLDNPRLKAAALASLKKYGVGTCGPRGFYGTFDVHLDLEDRLAKFMKTEEAIIYSYGFATIASAIPAYSKRGDIVFVDKAACFAIQKGLQASRSDIKVFNHNDMDDLERLLKEQEIEDQKNPRKARVTRRFIIVEGLYMNTGTVCPLPELVKLKYKYKARIFLEESLSFGVLGEHGRGVTEHFGISIDDIDLISANMENSLASIGGFCCGRSFVIDHQRLSGQGYCFSASLPPLLAAAAIEALNIMEENPGIFAVLKEKCKRIHKALQGIPGLKVVGESISPALHLQLEETTGCRERDVKLLQEIVTQCMDRGIALTQARYLEKEEKYLPPPSIRVVVTVEQTEEDLEKAASTISEVAQTVLL.

Residues 1 to 15 (MATVAEQWVLVEMVQ) lie on the Lumenal side of the membrane. The interval 1-66 (MATVAEQWVL…KEELIEEWQP (66 aa)) is interaction with SPTLC2. The chain crosses the membrane as a helical span at residues 16–36 (ALYEAPAYHLILEGILILWII). Residues 37–473 (RLLFSKTYKL…ISEVAQTVLL (437 aa)) are Cytoplasmic-facing. At Y164 the chain carries Phosphotyrosine; by ABL.

This sequence belongs to the class-II pyridoxal-phosphate-dependent aminotransferase family. In terms of assembly, component of the serine palmitoyltransferase (SPT) complex, which is also composed of SPTLC2 or SPTLC3 and SPTSSA or SPTSSB. The heterodimer with SPTLC2 or SPTLC3 forms the catalytic core of the enzyme, while SPTSSA or SPTSSB subunits determine substrate specificity. SPT also interacts with ORMDL proteins, especially ORMDL3, which negatively regulate SPT activity in the presence of ceramides. Forms dimers of heterodimers with SPTLC2. Interacts with RTN4. Requires pyridoxal 5'-phosphate as cofactor. In terms of processing, phosphorylation at Tyr-164 inhibits activity and promotes cell survival.

Its subcellular location is the endoplasmic reticulum membrane. The enzyme catalyses L-serine + hexadecanoyl-CoA + H(+) = 3-oxosphinganine + CO2 + CoA. The catalysed reaction is octadecanoyl-CoA + L-serine + H(+) = 3-oxoeicosasphinganine + CO2 + CoA. It catalyses the reaction tetradecanoyl-CoA + L-serine + H(+) = 3-oxohexadecasphinganine + CO2 + CoA. It carries out the reaction dodecanoyl-CoA + L-serine + H(+) = 3-oxotetradecasphinganine + CO2 + CoA. It functions in the pathway lipid metabolism; sphingolipid metabolism. Its activity is regulated as follows. SPT complex catalytic activity is negatively regulated by ORMDL proteins, including ORMDL3, in the presence of ceramides. This mechanism allows to maintain ceramide levels at sufficient concentrations for the production of complex sphingolipids, but which prevents the accumulation of ceramides to levels that trigger apoptosis. In terms of biological role, component of the serine palmitoyltransferase multisubunit enzyme (SPT) that catalyzes the initial and rate-limiting step in sphingolipid biosynthesis by condensing L-serine and activated acyl-CoA (most commonly palmitoyl-CoA) to form long-chain bases. The SPT complex is also composed of SPTLC2 or SPTLC3 and SPTSSA or SPTSSB. Within this complex, the heterodimer with SPTLC2 or SPTLC3 forms the catalytic core. The composition of the serine palmitoyltransferase (SPT) complex determines the substrate preference. The SPTLC1-SPTLC2-SPTSSA complex shows a strong preference for C16-CoA substrate, while the SPTLC1-SPTLC3-SPTSSA isozyme uses both C14-CoA and C16-CoA as substrates, with a slight preference for C14-CoA. The SPTLC1-SPTLC2-SPTSSB complex shows a strong preference for C18-CoA substrate, while the SPTLC1-SPTLC3-SPTSSB isozyme displays an ability to use a broader range of acyl-CoAs, without apparent preference. Required for adipocyte cell viability and metabolic homeostasis. The polypeptide is Serine palmitoyltransferase 1 (SPTLC1) (Bos taurus (Bovine)).